The sequence spans 557 residues: Protein NRT1/ PTR FAMILY 5.14 (557 aa).

A run of 2 helical transmembrane segments spans residues 35–55 (AALFIIGVEVAERFAYYGIGS) and 78–98 (AWSGIATLLPVLGAFVADAFL). The residue at position 103 (Thr-103) is a Phosphothreonine. Helical transmembrane passes span 104-124 (IIISSLIYVLGLAFLTLSAFL), 133-153 (SSTSSFLNVLFFFSLYLVAIG), 183-203 (FFNWWYLSLSAGICFAILVVV), 209-229 (FSWAFGFGIPCVFMVISLVLF), 320-340 (IPVWFTTLAYAIPYAQYMTFF), 357-377 (IPPASLQVFIGISIVLFVPIY), 401-421 (IGTGIVLSTITMVIAALVEFK), 443-463 (IWWLIPQYLLLGLADVYTLVG), 479-499 (IGLALYLSALGVGSLLSSLLI), and 526-546 (YFYWLLAIVSAVGFFTFLFIS).

This sequence belongs to the major facilitator superfamily. Proton-dependent oligopeptide transporter (POT/PTR) (TC 2.A.17) family. Expressed in roots.

Its subcellular location is the membrane. This is Protein NRT1/ PTR FAMILY 5.14 (NPF5.14) from Arabidopsis thaliana (Mouse-ear cress).